Here is a 312-residue protein sequence, read N- to C-terminus: Aquaglyceroporin-2 (312 aa).

The next 6 helical transmembrane spans lie at 78-98 (FLGN…SLLV), 104-124 (LGLT…SLGI), 151-171 (YIAA…GVFA), 203-223 (GIFY…LCVC), 239-259 (VAIG…SPLA), and 286-306 (YYFW…LFLY).

Belongs to the MIP/aquaporin (TC 1.A.8) family.

The protein localises to the membrane. The enzyme catalyses glycerol(in) = glycerol(out). It carries out the reaction H2O(in) = H2O(out). It catalyses the reaction urea(in) = urea(out). In terms of biological role, mediates water and glycerol transport across cell membranes. Permeable to urea. Permeable to methylamine/methylammonium. Permeable to dihydroxyacetone. This chain is Aquaglyceroporin-2, found in Trypanosoma brucei brucei.